Here is a 497-residue protein sequence, read N- to C-terminus: Probable cytosol aminopeptidase (497 aa).

Mn(2+) is bound by residues Lys268 and Asp273. Lys280 is a catalytic residue. Mn(2+) contacts are provided by Asp291, Asp350, and Glu352. The active site involves Arg354.

This sequence belongs to the peptidase M17 family. It depends on Mn(2+) as a cofactor.

The protein resides in the cytoplasm. It carries out the reaction Release of an N-terminal amino acid, Xaa-|-Yaa-, in which Xaa is preferably Leu, but may be other amino acids including Pro although not Arg or Lys, and Yaa may be Pro. Amino acid amides and methyl esters are also readily hydrolyzed, but rates on arylamides are exceedingly low.. The catalysed reaction is Release of an N-terminal amino acid, preferentially leucine, but not glutamic or aspartic acids.. Presumably involved in the processing and regular turnover of intracellular proteins. Catalyzes the removal of unsubstituted N-terminal amino acids from various peptides. This Alkalilimnicola ehrlichii (strain ATCC BAA-1101 / DSM 17681 / MLHE-1) protein is Probable cytosol aminopeptidase.